Consider the following 232-residue polypeptide: Ion-translocating oxidoreductase complex subunit E (232 aa).

Transmembrane regions (helical) follow at residues 18 to 38 (GLVQ…LTNA), 39 to 59 (IGLG…VSLV), 69 to 89 (IPVF…LINA), 93 to 113 (GLYL…VIIG), 127 to 147 (AAFD…LLGA), and 182 to 202 (NFLL…LIAI).

It belongs to the NqrDE/RnfAE family. The complex is composed of six subunits: RnfA, RnfB, RnfC, RnfD, RnfE and RnfG.

Its subcellular location is the cell inner membrane. Part of a membrane-bound complex that couples electron transfer with translocation of ions across the membrane. The sequence is that of Ion-translocating oxidoreductase complex subunit E from Shewanella loihica (strain ATCC BAA-1088 / PV-4).